The chain runs to 192 residues: Ion-translocating oxidoreductase complex subunit B (192 aa).

Positions 1–26 are hydrophobic; it reads MSAVWIAVIAISLLGLIFGLILGYAS. One can recognise a 4Fe-4S domain in the interval 32–91; it reads QDDPVVEKIDELLPQSQCGQCGYPGCRPYAEAVGAQGEKINRCAPGGEAVMLKIAALLNV. Cys49, Cys52, Cys57, Cys74, Cys117, Cys120, Cys123, Cys127, Cys147, Cys150, Cys153, and Cys157 together coordinate [4Fe-4S] cluster. 4Fe-4S ferredoxin-type domains lie at 108-137 and 138-167; these read MLAV…GATR and AMHT…LVPV.

Belongs to the 4Fe4S bacterial-type ferredoxin family. RnfB subfamily. As to quaternary structure, the complex is composed of six subunits: RnfA, RnfB, RnfC, RnfD, RnfE and RnfG. [4Fe-4S] cluster is required as a cofactor.

It localises to the cell inner membrane. Part of a membrane-bound complex that couples electron transfer with translocation of ions across the membrane. The protein is Ion-translocating oxidoreductase complex subunit B of Klebsiella pneumoniae (strain 342).